We begin with the raw amino-acid sequence, 256 residues long: Non-specific lipid transfer protein GPI-anchored 23 (256 aa).

Positions 1–21 are cleaved as a signal peptide; sequence MKPSFVLLSIVLLLSSSLSDA. An N-linked (GlcNAc...) asparagine glycan is attached at Asn-41. Intrachain disulfides connect Cys-45-Cys-88, Cys-55-Cys-72, Cys-73-Cys-113, and Cys-86-Cys-121. Residues 125 to 230 are disordered; it reads TPAASTPVSP…SPSPSPSPSI (106 aa). Residues 138-230 show a composition bias toward low complexity; the sequence is SPTTSPSSAK…SPSPSPSPSI (93 aa). Ser-225 carries the GPI-anchor amidated serine lipid modification. Positions 226 to 256 are cleaved as a propeptide — removed in mature form; that stretch reads PSPSISSSGILLVSKLFIAVVMVSSFLYILA.

Belongs to the plant LTP family. As to expression, confined to the anthers of the inflorescence.

The protein resides in the cell membrane. Probable lipid transfer protein. In Arabidopsis thaliana (Mouse-ear cress), this protein is Non-specific lipid transfer protein GPI-anchored 23.